The following is a 231-amino-acid chain: Small ribosomal subunit protein uS2c (231 aa).

It belongs to the universal ribosomal protein uS2 family.

It localises to the plastid. The protein localises to the chloroplast. This Gracilaria tenuistipitata var. liui (Red alga) protein is Small ribosomal subunit protein uS2c (rps2).